Reading from the N-terminus, the 55-residue chain is Large ribosomal subunit protein bL33 (55 aa).

The protein belongs to the bacterial ribosomal protein bL33 family.

The chain is Large ribosomal subunit protein bL33 from Caulobacter vibrioides (strain ATCC 19089 / CIP 103742 / CB 15) (Caulobacter crescentus).